Here is a 274-residue protein sequence, read N- to C-terminus: MNADRTLSDEQYDWIVAYERHITPHAVLSVRTPAYGRMPPLQIPTFTGPTPTYFVYDGNVEEVSGQLIKDPSDDTLPHHYAATWTCSLFTSRPPSDPAWPRDSVMQYDSNWSPYHRVPMRYFPSFMTLDSDLLGPNDGFWPLLHRCAGFRLRSPWRFPLDVLAAGIGTTVSTIRSLEKAGALNTVEGLLRALGWKYHHLSGLRPQHVEYCMSVWSLSFTRADLDVIDPASWFDGLLRSPIYPDEAPIGLNCEQITTHPFVLLNWIRVQLMDDGC.

This sequence belongs to the aquareoviridae NS4 protein family.

The protein is Non-structural protein 4 (S7) of Notemigonus crysoleucas (Golden shiner).